We begin with the raw amino-acid sequence, 990 residues long: Bifunctional glutamine synthetase adenylyltransferase/adenylyl-removing enzyme (990 aa).

Residues 1–474 (MIFSAITADL…HYAKLFEGDP (474 aa)) are adenylyl removase. The interval 478–990 (AKLPPVDYGA…FNRLIGGEDA (513 aa)) is adenylyl transferase.

This sequence belongs to the GlnE family. The cofactor is Mg(2+).

It carries out the reaction [glutamine synthetase]-O(4)-(5'-adenylyl)-L-tyrosine + phosphate = [glutamine synthetase]-L-tyrosine + ADP. It catalyses the reaction [glutamine synthetase]-L-tyrosine + ATP = [glutamine synthetase]-O(4)-(5'-adenylyl)-L-tyrosine + diphosphate. Involved in the regulation of glutamine synthetase GlnA, a key enzyme in the process to assimilate ammonia. When cellular nitrogen levels are high, the C-terminal adenylyl transferase (AT) inactivates GlnA by covalent transfer of an adenylyl group from ATP to specific tyrosine residue of GlnA, thus reducing its activity. Conversely, when nitrogen levels are low, the N-terminal adenylyl removase (AR) activates GlnA by removing the adenylyl group by phosphorolysis, increasing its activity. The regulatory region of GlnE binds the signal transduction protein PII (GlnB) which indicates the nitrogen status of the cell. This chain is Bifunctional glutamine synthetase adenylyltransferase/adenylyl-removing enzyme, found in Rhodopseudomonas palustris (strain TIE-1).